The chain runs to 988 residues: Ubiquitin carboxyl-terminal hydrolase 36 (988 aa).

The segment at 16–55 (PTLRTDNNGARKQAEHPNNQSHHNHPHPTSNPNELPKPKR) is disordered. Positions 31–48 (HPNNQSHHNHPHPTSNPN) are enriched in low complexity. One can recognise a USP domain in the interval 78–386 (TGMINVGNTC…NAYIMFFELD (309 aa)). The active-site Nucleophile is Cys-87. His-345 serves as the catalytic Proton acceptor. Disordered stretches follow at residues 393-422 (PPAN…SPSP), 483-782 (ATSA…VTSN), and 868-988 (EQRQ…QQQT). 2 stretches are compositionally biased toward low complexity: residues 408–422 (STTP…SPSP) and 490–509 (NGNK…KSIN). 2 positions are modified to phosphoserine: Ser-419 and Ser-421. Residues 532 to 544 (TTAQLPSMPNMTE) show a composition bias toward polar residues. A phosphothreonine mark is found at Thr-561 and Thr-565. 2 positions are modified to phosphoserine: Ser-575 and Ser-577. Over residues 592-601 (EGEDFSESDQ) the composition is skewed to acidic residues. Over residues 602–631 (ESGQTNGHSKTNGSLTNGSASSSVHVNNSK) the composition is skewed to polar residues. A compositionally biased stretch (basic and acidic residues) spans 632–649 (QKTDAIDEIFKSLKKSAD). Ser-650 carries the post-translational modification Phosphoserine. The span at 650-659 (SEEDDDEEEP) shows a compositional bias: acidic residues. Residues 669 to 679 (PQKQSQSQSKA) show a composition bias toward low complexity. Positions 680-689 (PPSPKTPPSP) are enriched in pro residues. Residue Ser-682 is modified to Phosphoserine. Phosphothreonine is present on Thr-685. A Phosphoserine modification is found at Ser-688. The segment covering 707–717 (VDAIDDDDDAV) has biased composition (acidic residues). Thr-728 carries the phosphothreonine modification. The span at 735 to 747 (NPFSSSKPSTDSP) shows a compositional bias: polar residues. Phosphoserine is present on Ser-746. At Thr-749 the chain carries Phosphothreonine. Positions 762–782 (ALKSHQQPRVGNGYQSNVTSN) are enriched in polar residues. Low complexity-rich tracts occupy residues 892–903 (SGSAKGNNASNS) and 930–943 (RFHN…FQQR).

This sequence belongs to the peptidase C19 family. As to quaternary structure, interacts with atms/PAF1, but not with CycT.

It is found in the nucleus. Its subcellular location is the nucleolus. It catalyses the reaction Thiol-dependent hydrolysis of ester, thioester, amide, peptide and isopeptide bonds formed by the C-terminal Gly of ubiquitin (a 76-residue protein attached to proteins as an intracellular targeting signal).. Its function is as follows. Required for maintaining multiple types of adult stem cells, including male and female germline, epithelial follicle cell and intestinal stem cells. May function as a transcriptional repressor by continually deubiquiting histone H2B at the promoters of genes critical for cellular differentiation, thereby preventing histone H3 'Lys-4' trimethylation (H3K4). Controls selective autophagy activation by ubiquitinated proteins. This is Ubiquitin carboxyl-terminal hydrolase 36 (Usp36) from Drosophila simulans (Fruit fly).